A 100-amino-acid polypeptide reads, in one-letter code: Aspartyl/glutamyl-tRNA(Asn/Gln) amidotransferase subunit C (100 aa).

Belongs to the GatC family. As to quaternary structure, heterotrimer of A, B and C subunits.

The catalysed reaction is L-glutamyl-tRNA(Gln) + L-glutamine + ATP + H2O = L-glutaminyl-tRNA(Gln) + L-glutamate + ADP + phosphate + H(+). It carries out the reaction L-aspartyl-tRNA(Asn) + L-glutamine + ATP + H2O = L-asparaginyl-tRNA(Asn) + L-glutamate + ADP + phosphate + 2 H(+). In terms of biological role, allows the formation of correctly charged Asn-tRNA(Asn) or Gln-tRNA(Gln) through the transamidation of misacylated Asp-tRNA(Asn) or Glu-tRNA(Gln) in organisms which lack either or both of asparaginyl-tRNA or glutaminyl-tRNA synthetases. The reaction takes place in the presence of glutamine and ATP through an activated phospho-Asp-tRNA(Asn) or phospho-Glu-tRNA(Gln). The sequence is that of Aspartyl/glutamyl-tRNA(Asn/Gln) amidotransferase subunit C from Rickettsia typhi (strain ATCC VR-144 / Wilmington).